We begin with the raw amino-acid sequence, 67 residues long: Large ribosomal subunit protein bL35 (67 aa).

It belongs to the bacterial ribosomal protein bL35 family.

This Sphingopyxis alaskensis (strain DSM 13593 / LMG 18877 / RB2256) (Sphingomonas alaskensis) protein is Large ribosomal subunit protein bL35.